The following is a 775-amino-acid chain: Dipeptidyl peptidase 4 (775 aa).

Residues 1–15 (MKFLSLLLLVGVAQA) form the signal peptide. Residues asparagine 81, asparagine 111, and asparagine 219 are each glycosylated (N-linked (GlcNAc...) asparagine). Active-site charge relay system residues include serine 613, aspartate 690, and histidine 725. Asparagine 731 carries an N-linked (GlcNAc...) asparagine glycan.

This sequence belongs to the peptidase S9B family.

Its subcellular location is the secreted. The catalysed reaction is Release of an N-terminal dipeptide, Xaa-Yaa-|-Zaa-, from a polypeptide, preferentially when Yaa is Pro, provided Zaa is neither Pro nor hydroxyproline.. Functionally, extracellular dipeptidyl-peptidase which removes N-terminal dipeptides sequentially from polypeptides having unsubstituted N-termini provided that the penultimate residue is proline. Contributes to pathogenicity. The protein is Dipeptidyl peptidase 4 (DPP4) of Arthroderma otae (strain ATCC MYA-4605 / CBS 113480) (Microsporum canis).